The primary structure comprises 642 residues: Threonine--tRNA ligase (642 aa).

The region spanning 1–61 (MPVITLPDGS…DTDAQLAIIT (61 aa)) is the TGS domain. A catalytic region spans residues 243-534 (DHRKIGKQLD…LTEEFAGFFP (292 aa)). Zn(2+) contacts are provided by C334, H385, and H511.

It belongs to the class-II aminoacyl-tRNA synthetase family. As to quaternary structure, homodimer. Zn(2+) is required as a cofactor.

It localises to the cytoplasm. The catalysed reaction is tRNA(Thr) + L-threonine + ATP = L-threonyl-tRNA(Thr) + AMP + diphosphate + H(+). Functionally, catalyzes the attachment of threonine to tRNA(Thr) in a two-step reaction: L-threonine is first activated by ATP to form Thr-AMP and then transferred to the acceptor end of tRNA(Thr). Also edits incorrectly charged L-seryl-tRNA(Thr). The protein is Threonine--tRNA ligase of Pectobacterium atrosepticum (strain SCRI 1043 / ATCC BAA-672) (Erwinia carotovora subsp. atroseptica).